A 287-amino-acid chain; its full sequence is ATP synthase gamma chain (287 aa).

The protein belongs to the ATPase gamma chain family. F-type ATPases have 2 components, CF(1) - the catalytic core - and CF(0) - the membrane proton channel. CF(1) has five subunits: alpha(3), beta(3), gamma(1), delta(1), epsilon(1). CF(0) has three main subunits: a, b and c.

The protein resides in the cell inner membrane. Its function is as follows. Produces ATP from ADP in the presence of a proton gradient across the membrane. The gamma chain is believed to be important in regulating ATPase activity and the flow of protons through the CF(0) complex. In Baumannia cicadellinicola subsp. Homalodisca coagulata, this protein is ATP synthase gamma chain.